The primary structure comprises 122 residues: Cupin 2 conserved barrel domain-containing protein (122 aa).

Positions 55-119 are cupin 2 conserved barrel; the sequence is PGGVTTAEDH…DSPVEIVSIW (65 aa). Residues aspartate 63, histidine 65, glutamate 69, and histidine 103 each coordinate Zn(2+).

Zn(2+) serves as cofactor.

The enzyme catalyses N(6)-hydroxy-L-lysine + L-glutamate + ATP = 1-L-glutamo-2-N(6-)L-lysinohydrazine + AMP + diphosphate + 2 H(+). Inhibited by 1,10-phenanthroline (OP). Catalyzes hydrazine (N-N) bond formation from an unstable ester intermediate, the product of the ATP-dependent condensation of L-N(6)-OH-lysine and L-glutamine substrates by a methionyl-tRNA synthase-like protein. In Rhodococcus jostii (strain RHA1), this protein is Cupin 2 conserved barrel domain-containing protein.